The primary structure comprises 188 residues: GTP cyclohydrolase 1 (188 aa).

Residues Cys-76, His-79, and Cys-148 each coordinate Zn(2+).

Belongs to the GTP cyclohydrolase I family. In terms of assembly, homomer.

It carries out the reaction GTP + H2O = 7,8-dihydroneopterin 3'-triphosphate + formate + H(+). It participates in cofactor biosynthesis; 7,8-dihydroneopterin triphosphate biosynthesis; 7,8-dihydroneopterin triphosphate from GTP: step 1/1. This is GTP cyclohydrolase 1 from Thermoanaerobacter pseudethanolicus (strain ATCC 33223 / 39E) (Clostridium thermohydrosulfuricum).